A 121-amino-acid polypeptide reads, in one-letter code: Putative membrane protein insertion efficiency factor (121 aa).

The protein belongs to the UPF0161 family.

Its subcellular location is the cell inner membrane. Functionally, could be involved in insertion of integral membrane proteins into the membrane. This is Putative membrane protein insertion efficiency factor from Rhodopseudomonas palustris (strain HaA2).